A 930-amino-acid chain; its full sequence is Zn(2)-C6 fungal-type transcription factor FTF1c (930 aa).

The segment at residues 137 to 164 is a DNA-binding region (zn(2)-C6 fungal-type); sequence CIPCRRKKIRCSGEKPACEHCLRSYIPC.

The protein localises to the nucleus. Its function is as follows. Zn(2)-C6 fungal-type transcription factor that has a role in the establishment of the fungus within the plant and/or the progress of the disease. Regulates the expression of virulence factors such as SIX1 and SIX6. In Fusarium oxysporum f. sp. lycopersici (strain 4287 / CBS 123668 / FGSC 9935 / NRRL 34936) (Fusarium vascular wilt of tomato), this protein is Zn(2)-C6 fungal-type transcription factor FTF1c.